Here is a 264-residue protein sequence, read N- to C-terminus: Thiazole synthase (264 aa).

Residue K106 is the Schiff-base intermediate with DXP of the active site. Residues G167, 193–194 (AG), and 215–216 (NS) each bind 1-deoxy-D-xylulose 5-phosphate.

Belongs to the ThiG family. Homotetramer. Forms heterodimers with either ThiH or ThiS.

It localises to the cytoplasm. The enzyme catalyses [ThiS sulfur-carrier protein]-C-terminal-Gly-aminoethanethioate + 2-iminoacetate + 1-deoxy-D-xylulose 5-phosphate = [ThiS sulfur-carrier protein]-C-terminal Gly-Gly + 2-[(2R,5Z)-2-carboxy-4-methylthiazol-5(2H)-ylidene]ethyl phosphate + 2 H2O + H(+). It participates in cofactor biosynthesis; thiamine diphosphate biosynthesis. Functionally, catalyzes the rearrangement of 1-deoxy-D-xylulose 5-phosphate (DXP) to produce the thiazole phosphate moiety of thiamine. Sulfur is provided by the thiocarboxylate moiety of the carrier protein ThiS. In vitro, sulfur can be provided by H(2)S. This Pseudomonas fluorescens (strain Pf0-1) protein is Thiazole synthase.